Consider the following 218-residue polypeptide: tRNA (guanine-N(7)-)-methyltransferase (218 aa).

The disordered stretch occupies residues 1 to 25 (MRLKNKPWANELVEEHPESALDRPN). Residues 13 to 25 (VEEHPESALDRPN) show a composition bias toward basic and acidic residues. S-adenosyl-L-methionine is bound by residues glutamate 45, glutamate 70, aspartate 97, and aspartate 119. Aspartate 119 is an active-site residue. Position 123 (lysine 123) interacts with substrate. Positions 125–130 (RHEKRR) are interaction with RNA. Substrate is bound by residues aspartate 155 and 195 to 198 (TEYE).

This sequence belongs to the class I-like SAM-binding methyltransferase superfamily. TrmB family.

It catalyses the reaction guanosine(46) in tRNA + S-adenosyl-L-methionine = N(7)-methylguanosine(46) in tRNA + S-adenosyl-L-homocysteine. The protein operates within tRNA modification; N(7)-methylguanine-tRNA biosynthesis. Its function is as follows. Catalyzes the formation of N(7)-methylguanine at position 46 (m7G46) in tRNA. The protein is tRNA (guanine-N(7)-)-methyltransferase of Lactobacillus delbrueckii subsp. bulgaricus (strain ATCC BAA-365 / Lb-18).